The primary structure comprises 324 residues: Carbamate kinase (324 aa).

Belongs to the carbamate kinase family.

The protein resides in the cytoplasm. It carries out the reaction hydrogencarbonate + NH4(+) + ATP = carbamoyl phosphate + ADP + H2O + H(+). It participates in amino-acid degradation; L-arginine degradation via ADI pathway. The chain is Carbamate kinase from Rhizobium meliloti (strain 1021) (Ensifer meliloti).